A 284-amino-acid polypeptide reads, in one-letter code: Tryptophan 2,3-dioxygenase (284 aa).

Residues 53–57 (FIVQH), tyrosine 115, and arginine 119 contribute to the substrate site. Position 242 (histidine 242) interacts with heme. Position 256 (threonine 256) interacts with substrate.

The protein belongs to the tryptophan 2,3-dioxygenase family. In terms of assembly, homotetramer. Heme serves as cofactor.

The catalysed reaction is L-tryptophan + O2 = N-formyl-L-kynurenine. It participates in amino-acid degradation; L-tryptophan degradation via kynurenine pathway; L-kynurenine from L-tryptophan: step 1/2. In terms of biological role, heme-dependent dioxygenase that catalyzes the oxidative cleavage of the L-tryptophan (L-Trp) pyrrole ring and converts L-tryptophan to N-formyl-L-kynurenine. Catalyzes the oxidative cleavage of the indole moiety. The chain is Tryptophan 2,3-dioxygenase from Bordetella pertussis (strain Tohama I / ATCC BAA-589 / NCTC 13251).